A 152-amino-acid chain; its full sequence is Deoxyuridine 5'-triphosphate nucleotidohydrolase (152 aa).

Substrate contacts are provided by residues 71–73 (RSG), asparagine 84, 88–90 (LID), and methionine 98.

The protein belongs to the dUTPase family. The cofactor is Mg(2+).

It catalyses the reaction dUTP + H2O = dUMP + diphosphate + H(+). Its pathway is pyrimidine metabolism; dUMP biosynthesis; dUMP from dCTP (dUTP route): step 2/2. In terms of biological role, this enzyme is involved in nucleotide metabolism: it produces dUMP, the immediate precursor of thymidine nucleotides and it decreases the intracellular concentration of dUTP so that uracil cannot be incorporated into DNA. This is Deoxyuridine 5'-triphosphate nucleotidohydrolase from Klebsiella pneumoniae (strain 342).